Consider the following 561-residue polypeptide: Urocanate hydratase (561 aa).

NAD(+) is bound by residues 52 to 53 (GG), Gln130, 176 to 178 (GMG), Glu196, Arg201, 242 to 243 (NA), 263 to 267 (QTSAH), 273 to 274 (YL), and Tyr322. The active site involves Cys410. Gly492 lines the NAD(+) pocket.

This sequence belongs to the urocanase family. It depends on NAD(+) as a cofactor.

The protein resides in the cytoplasm. It catalyses the reaction 4-imidazolone-5-propanoate = trans-urocanate + H2O. The protein operates within amino-acid degradation; L-histidine degradation into L-glutamate; N-formimidoyl-L-glutamate from L-histidine: step 2/3. Catalyzes the conversion of urocanate to 4-imidazolone-5-propionate. In Salmonella arizonae (strain ATCC BAA-731 / CDC346-86 / RSK2980), this protein is Urocanate hydratase.